The primary structure comprises 236 residues: Ribonuclease HII (236 aa).

An RNase H type-2 domain is found at 21–214 (RTVAGVDEVG…LDALPRWQHL (194 aa)). 3 residues coordinate a divalent metal cation: aspartate 27, glutamate 28, and aspartate 119.

Belongs to the RNase HII family. Mn(2+) is required as a cofactor. Requires Mg(2+) as cofactor.

The protein localises to the cytoplasm. The enzyme catalyses Endonucleolytic cleavage to 5'-phosphomonoester.. Endonuclease that specifically degrades the RNA of RNA-DNA hybrids. This chain is Ribonuclease HII, found in Streptomyces griseus subsp. griseus (strain JCM 4626 / CBS 651.72 / NBRC 13350 / KCC S-0626 / ISP 5235).